The following is a 382-amino-acid chain: Heme A synthase (382 aa).

Transmembrane regions (helical) follow at residues 37–57 (IRVW…VGGL), 126–146 (VIGV…QVPA), 152–172 (LLFL…MVAS), 188–208 (LATH…YIME), 231–251 (STGL…VAGI), 288–308 (LVQF…VVVW), and 332–352 (LQIV…IAIF). H293 serves as a coordination point for heme. Residue H353 participates in heme binding. Residues 356 to 376 (LAVIVWVLILRARFLSGYPIA) form a helical membrane-spanning segment.

Belongs to the COX15/CtaA family. Type 2 subfamily. As to quaternary structure, interacts with CtaB. Heme b serves as cofactor.

Its subcellular location is the cell membrane. The catalysed reaction is Fe(II)-heme o + 2 A + H2O = Fe(II)-heme a + 2 AH2. Its pathway is porphyrin-containing compound metabolism; heme A biosynthesis; heme A from heme O: step 1/1. Functionally, catalyzes the conversion of heme O to heme A by two successive hydroxylations of the methyl group at C8. The first hydroxylation forms heme I, the second hydroxylation results in an unstable dihydroxymethyl group, which spontaneously dehydrates, resulting in the formyl group of heme A. This is Heme A synthase from Roseobacter denitrificans (strain ATCC 33942 / OCh 114) (Erythrobacter sp. (strain OCh 114)).